A 506-amino-acid chain; its full sequence is MPNEIFTINLNAQAIIPEAFILLGIVGTLLVDLAGEKTASKWAPIICYLSIGSSLFSLALQWSNPVNSAFLGSFNSDNLAIAFRAIIALSTLVSLLISWRYTEQSGSPIGEFAAIVLSATLGAMLLCGSTDLISIFISLETLSVASYLLSGYLKRDPRSSEAALKYLLVGSAAAAVYLYGSSFLYGLSGSTNLATIGLEIINKPSFITSLALVFVLSTVAFKIAAVPFHQWTPDVYEGSPTPVVAFLSVGSKTAGFAFAIRILSTTFSSFDEEWKLLFTILAILSMALGNVVALAQTSMKRMLAYSSIGQAGFVMIGIVSGTQDGLSATVLYLAAYLFMNLGAFSCVILFSLRTGSDRILDYSGLYQKDPLITLGLSLCLLSLGGLPPMLGFFGKIYLFFAGWANHQYLLVIIGLVTSVISIYYYISVIKMMVVKEPQEASEIVKSYPEINWGIVGMPPLRVALYTCVAVTALGGILSNPLFKLANTAVSETPFLQEIIAMANNIS.

13 consecutive transmembrane segments (helical) span residues 14–34, 42–62, 79–99, 108–128, 132–152, 167–187, 206–226, 240–260, 276–296, 302–322, 330–350, 374–394, and 409–429; these read AIIP…VDLA, WAPI…ALQW, LAIA…LISW, PIGE…LLCG, LISI…LSGY, LLVG…LYGL, FITS…IAAV, PTPV…AFAI, LLFT…ALAQ, MLAY…VSGT, VLYL…VILF, LGLS…GFFG, and LLVI…ISVI.

This sequence belongs to the complex I subunit 2 family. In terms of assembly, NDH-1 can be composed of about 15 different subunits; different subcomplexes with different compositions have been identified which probably have different functions.

The protein resides in the cellular thylakoid membrane. The enzyme catalyses a plastoquinone + NADH + (n+1) H(+)(in) = a plastoquinol + NAD(+) + n H(+)(out). The catalysed reaction is a plastoquinone + NADPH + (n+1) H(+)(in) = a plastoquinol + NADP(+) + n H(+)(out). In terms of biological role, NDH-1 shuttles electrons from an unknown electron donor, via FMN and iron-sulfur (Fe-S) centers, to quinones in the respiratory and/or the photosynthetic chain. The immediate electron acceptor for the enzyme in this species is believed to be plastoquinone. Couples the redox reaction to proton translocation, and thus conserves the redox energy in a proton gradient. Cyanobacterial NDH-1 also plays a role in inorganic carbon-concentration. The chain is NAD(P)H-quinone oxidoreductase subunit 2 from Prochlorococcus marinus (strain MIT 9312).